The primary structure comprises 430 residues: Trigger factor (430 aa).

Positions Gly-163 to Pro-248 constitute a PPIase FKBP-type domain.

It belongs to the FKBP-type PPIase family. Tig subfamily.

It is found in the cytoplasm. The catalysed reaction is [protein]-peptidylproline (omega=180) = [protein]-peptidylproline (omega=0). In terms of biological role, involved in protein export. Acts as a chaperone by maintaining the newly synthesized protein in an open conformation. Functions as a peptidyl-prolyl cis-trans isomerase. This chain is Trigger factor, found in Clostridium botulinum (strain Langeland / NCTC 10281 / Type F).